Reading from the N-terminus, the 225-residue chain is Cytochrome c oxidase subunit 2 (225 aa).

The Mitochondrial intermembrane segment spans residues 1–25 (MSTWMMFMFQESNSFYADNLVSFHN). The helical transmembrane segment at 26-47 (LVMMIIIMISTLTIYIIFDLFM) threads the bilayer. Residues 48–62 (NKFSNLFLLKNHNIE) are Mitochondrial matrix-facing. A helical membrane pass occupies residues 63-82 (IIWTIVPIVILLIICFPSLK). The Mitochondrial intermembrane segment spans residues 83 to 225 (ILYLIDEIIN…FFLNWINKQN (143 aa)). Cu cation-binding residues include histidine 159, cysteine 194, glutamate 196, cysteine 198, histidine 202, and methionine 205. Glutamate 196 serves as a coordination point for Mg(2+).

This sequence belongs to the cytochrome c oxidase subunit 2 family. Component of the cytochrome c oxidase (complex IV, CIV), a multisubunit enzyme composed of a catalytic core of 3 subunits and several supernumerary subunits. The complex exists as a monomer or a dimer and forms supercomplexes (SCs) in the inner mitochondrial membrane with ubiquinol-cytochrome c oxidoreductase (cytochrome b-c1 complex, complex III, CIII). It depends on Cu cation as a cofactor.

It is found in the mitochondrion inner membrane. The catalysed reaction is 4 Fe(II)-[cytochrome c] + O2 + 8 H(+)(in) = 4 Fe(III)-[cytochrome c] + 2 H2O + 4 H(+)(out). Functionally, component of the cytochrome c oxidase, the last enzyme in the mitochondrial electron transport chain which drives oxidative phosphorylation. The respiratory chain contains 3 multisubunit complexes succinate dehydrogenase (complex II, CII), ubiquinol-cytochrome c oxidoreductase (cytochrome b-c1 complex, complex III, CIII) and cytochrome c oxidase (complex IV, CIV), that cooperate to transfer electrons derived from NADH and succinate to molecular oxygen, creating an electrochemical gradient over the inner membrane that drives transmembrane transport and the ATP synthase. Cytochrome c oxidase is the component of the respiratory chain that catalyzes the reduction of oxygen to water. Electrons originating from reduced cytochrome c in the intermembrane space (IMS) are transferred via the dinuclear copper A center (CU(A)) of subunit 2 and heme A of subunit 1 to the active site in subunit 1, a binuclear center (BNC) formed by heme A3 and copper B (CU(B)). The BNC reduces molecular oxygen to 2 water molecules using 4 electrons from cytochrome c in the IMS and 4 protons from the mitochondrial matrix. This chain is Cytochrome c oxidase subunit 2 (COII), found in Apis koschevnikovi (Koschevnikov's honey bee).